A 299-amino-acid chain; its full sequence is NAD kinase (299 aa).

The active-site Proton acceptor is the Asp78. NAD(+)-binding positions include 78–79, 151–152, Lys162, Arg179, Asp181, 192–197, and Gln252; these read DG, ND, and TAYALS.

The protein belongs to the NAD kinase family. It depends on a divalent metal cation as a cofactor.

Its subcellular location is the cytoplasm. It carries out the reaction NAD(+) + ATP = ADP + NADP(+) + H(+). Its function is as follows. Involved in the regulation of the intracellular balance of NAD and NADP, and is a key enzyme in the biosynthesis of NADP. Catalyzes specifically the phosphorylation on 2'-hydroxyl of the adenosine moiety of NAD to yield NADP. The protein is NAD kinase of Coxiella burnetii (strain CbuG_Q212) (Coxiella burnetii (strain Q212)).